The primary structure comprises 325 residues: L-lactate dehydrogenase (325 aa).

Residues valine 19, aspartate 40, lysine 45, tyrosine 70, and 84–85 contribute to the NAD(+) site; that span reads GA. Substrate contacts are provided by glutamine 87 and arginine 93. Residues threonine 106, 123 to 125, and serine 148 each bind NAD(+); that span reads AAN. Residue 125-128 participates in substrate binding; that stretch reads NPVD. 153–156 serves as a coordination point for substrate; sequence DSAR. Residues arginine 158 and histidine 173 each coordinate beta-D-fructose 1,6-bisphosphate. Catalysis depends on histidine 180, which acts as the Proton acceptor. Residue tyrosine 225 is modified to Phosphotyrosine. Position 234 (threonine 234) interacts with substrate.

This sequence belongs to the LDH/MDH superfamily. LDH family. Homotetramer.

It localises to the cytoplasm. The catalysed reaction is (S)-lactate + NAD(+) = pyruvate + NADH + H(+). The protein operates within fermentation; pyruvate fermentation to lactate; (S)-lactate from pyruvate: step 1/1. Its activity is regulated as follows. Allosterically activated by fructose 1,6-bisphosphate (FBP). Its function is as follows. Catalyzes the conversion of lactate to pyruvate. This is L-lactate dehydrogenase from Latilactobacillus sakei subsp. sakei (strain 23K) (Lactobacillus sakei subsp. sakei).